Here is a 422-residue protein sequence, read N- to C-terminus: Structural polyprotein (422 aa).

The Extracellular segment spans residues 1–359 (SVTEHFNVYK…WPHEIIQYYY (359 aa)). Residues Asn200 and Asn262 are each glycosylated (N-linked (GlcNAc...) asparagine; by host). The helical transmembrane segment at 360–382 (GLYPAATIAAVSGXSLMALLTLA) threads the bilayer. The Cytoplasmic segment spans residues 383–422 (ATCCMLATARRKCLTPYALTPGAVVPLTLGLXXCAPRANA). 3 S-palmitoyl cysteine; by host lipidation sites follow: Cys385, Cys395, and Cys416. Positions 395 to 415 (CLTPYALTPGAVVPLTLGLXX) are transient transmembrane before p62-6K protein processing.

As to quaternary structure, spike glycoprotein E2: Processing of the precursor of protein E3/E2 into E2 and E3 results in a heterodimer of the spike glycoproteins E2 and E1. Spike glycoprotein E2: Spike at virion surface are constituted of three E2-E1 heterodimers. Spike glycoprotein E2: Interacts with 6K protein. Post-translationally, structural polyprotein: Specific enzymatic cleavages in vivo yield mature proteins. Capsid protein is auto-cleaved during polyprotein translation, unmasking a signal peptide at the N-terminus of the precursor of E3/E2. The remaining polyprotein is then targeted to the host endoplasmic reticulum, where host signal peptidase cleaves it into pE2, 6K and E1 proteins. pE2 is further processed to mature E3 and E2 by host furin in trans-Golgi vesicle. Spike glycoprotein E2: Palmitoylated via thioester bonds. These palmitoylations may induce disruption of the C-terminus transmembrane. This would result in the reorientation of E2 C-terminus from lumenal to cytoplasmic side. In terms of processing, spike glycoprotein E2: N-glycosylated.

It localises to the virion membrane. The protein resides in the host cell membrane. Functionally, spike glycoprotein E2: Plays a role in viral attachment to target host cell, by binding to the cell receptor. Synthesized as a p62 precursor which is processed by furin at the cell membrane just before virion budding, giving rise to E2-E1 heterodimer. The p62-E1 heterodimer is stable, whereas E2-E1 is unstable and dissociate at low pH. p62 is processed at the last step, presumably to avoid E1 fusion activation before its final export to cell surface. E2 C-terminus contains a transitory transmembrane that would be disrupted by palmitoylation, resulting in reorientation of the C-terminal tail from lumenal to cytoplasmic side. This step is critical since E2 C-terminus is involved in budding by interacting with capsid proteins. This release of E2 C-terminus in cytoplasm occurs lately in protein export, and precludes premature assembly of particles at the endoplasmic reticulum membrane. The chain is Structural polyprotein from Ross river virus (strain 213970) (RRV).